Reading from the N-terminus, the 603-residue chain is MRIEDFSLKLIPSSPGVYLMKDVHDQVLYIGKAKNLKNRLASYFHEKGDSRERIPFLMKKTASIETIVVSNETEALLLENNLIKQHHPKYNVLLKDDKTFFCLAISLSHSWPKVEAIRTKAITSSQRQLIFGPYVSAEACHTLLEVISQWFPLRTCSDREFALRKRPCILYDMKRCLAPCVGYCTPEEYQGTLDKAILFLKGKIEEVVKDLEKVIQKASDNLEFEQAANYYRTLSLIKQAMAKQQVEKFHFQNIDALGLYRHKQRTILTLLTVRSGKLLGARHFSFFENAQEDQDLLSSFILQYYVSQPYIPKEILTPLPLEFPTLSYVLNAESPPRLRSPKTGYGKELLDLAYRNAKAYAATTLPSSTLPYQDFQNILRMSQYPYRIECYDNAHMQGAHATGVYIVFENNGFDPKQYRTFSIDSEKTQNDLALLEEVLLRRFHSLTTALPDMIVVDGGKTHYNKTKKIIQTLNLTGIQVVTIAKEKSNHSRGLNKEKIFCETFPEGFSLPPTSNLLQFFQILRDEAHRFAISKHRKKRGKALFEQEKIPGIGEVKRKRLLQKFKSWKQVMLSSQEELEAIPGLTKKDIAVLLARQKDFNKSD.

A GIY-YIG domain is found at 13-92; that stretch reads SSPGVYLMKD…IKQHHPKYNV (80 aa). One can recognise a UVR domain in the interval 205–240; the sequence is EEVVKDLEKVIQKASDNLEFEQAANYYRTLSLIKQA.

Belongs to the UvrC family. Interacts with UvrB in an incision complex.

It is found in the cytoplasm. In terms of biological role, the UvrABC repair system catalyzes the recognition and processing of DNA lesions. UvrC both incises the 5' and 3' sides of the lesion. The N-terminal half is responsible for the 3' incision and the C-terminal half is responsible for the 5' incision. The polypeptide is UvrABC system protein C (Chlamydia pneumoniae (Chlamydophila pneumoniae)).